Here is a 537-residue protein sequence, read N- to C-terminus: MIYTLTRGSLLGSTCKLRYSSLFSYLSTAALRLGFENPTNGNPMDNSSHHIGYVNGFNGGEQSLGGFQQNSYEQSLNPVSGQNPTNRFYQNGYNRNQSYGEHSEIINQRNQNWQSSDGCSSYGTTGNGVPQENNTGGNHFQQDHSGHSSLDELDSICREGKVKKAVEIIKSWRNEGYVVDLPRLFWIAQLCGDAQALQEAKVVHEFITSSVGISDISAYNSIIEMYSGCGSVEDALTVFNSMPERNLETWCGVIRCFAKNGQGEDAIDTFSRFKQEGNKPDGEMFKEIFFACGVLGDMNEGLLHFESMYKEYGIIPCMEHYVSLVKMLAEPGYLDEALRFVESMEPNVDLWETLMNLSRVHGDLILGDRCQDMVEQLDASRLNKESKAGLVPVKSSDLVKEKLQRMAKGPNYGIRYMAAGDISRPENRELYMALKSLKEHMIEIGYVPLSKLALHDVDQESKDENLFNHNERFAFISTFLDTPARSLIRVMKNLRVCADCHNALKLMSKIVGRELISRDAKRFHHMKDGVCSCREYW.

The transit peptide at 1-110 directs the protein to the mitochondrion; it reads MIYTLTRGSL…EHSEIINQRN (110 aa). Polar residues predominate over residues 113-140; that stretch reads WQSSDGCSSYGTTGNGVPQENNTGGNHF. A disordered region spans residues 113–148; sequence WQSSDGCSSYGTTGNGVPQENNTGGNHFQQDHSGHS. PPR repeat units follow at residues 145–179, 180–210, 215–249, 250–280, 281–316, and 317–347; these read SGHSSLDELDSICREGKVKKAVEIIKSWRNEGYVV, DLPRLFWIAQLCGDAQALQEAKVVHEFITSS, DISAYNSIIEMYSGCGSVEDALTVFNSMPERNLET, WCGVIRCFAKNGQGEDAIDTFSRFKQEGNKP, DGEMFKEIFFACGVLGDMNEGLLHFESMYKEYGIIP, and CMEHYVSLVKMLAEPGYLDEALRFVESMEPN. Residues 412-442 form a type E(+) motif region; sequence YGIRYMAAGDISRPENRELYMALKSLKEHMI. Positions 443 to 537 are type DYW motif; sequence EIGYVPLSKL…DGVCSCREYW (95 aa).

It belongs to the PPR family. PCMP-H subfamily.

It is found in the mitochondrion. In Arabidopsis thaliana (Mouse-ear cress), this protein is Pentatricopeptide repeat-containing protein At4g32450, mitochondrial (PCMP-H63).